The following is a 635-amino-acid chain: 1-deoxy-D-xylulose-5-phosphate synthase (635 aa).

Residues H77 and 118–120 contribute to the thiamine diphosphate site; that span reads GHA. D149 is a binding site for Mg(2+). Thiamine diphosphate is bound by residues 150–151, N178, F290, and E375; that span reads GS. N178 serves as a coordination point for Mg(2+).

Belongs to the transketolase family. DXPS subfamily. In terms of assembly, homodimer. The cofactor is Mg(2+). Thiamine diphosphate is required as a cofactor.

The enzyme catalyses D-glyceraldehyde 3-phosphate + pyruvate + H(+) = 1-deoxy-D-xylulose 5-phosphate + CO2. The protein operates within metabolic intermediate biosynthesis; 1-deoxy-D-xylulose 5-phosphate biosynthesis; 1-deoxy-D-xylulose 5-phosphate from D-glyceraldehyde 3-phosphate and pyruvate: step 1/1. Catalyzes the acyloin condensation reaction between C atoms 2 and 3 of pyruvate and glyceraldehyde 3-phosphate to yield 1-deoxy-D-xylulose-5-phosphate (DXP). The polypeptide is 1-deoxy-D-xylulose-5-phosphate synthase (Chlorobium phaeovibrioides (strain DSM 265 / 1930) (Prosthecochloris vibrioformis (strain DSM 265))).